A 52-amino-acid chain; its full sequence is Alpha-crystallin B chain (52 aa).

This sequence belongs to the small heat shock protein (HSP20) family. As to quaternary structure, homodimer. Aggregates with homologous proteins, including alpha-A-crystallin and the small heat shock protein HSPB1, to form large heteromeric complexes.

Its function is as follows. May contribute to the transparency and refractive index of the lens. This chain is Alpha-crystallin B chain (CRYAB), found in Eudromia elegans (Elegant crested-tinamou).